Here is a 135-residue protein sequence, read N- to C-terminus: MYAVVDVKDKQFKVQEGDTLYVPYHSDATAGQELTLDRVLLVSDGDGDVTLGTPTVEDATATARVLEHVKGDKVIVFKKKRRKRYRVKRGHRQQYTQIEIESLNANGPASSDDEEAAETSDAEPDEDPEAEPAEA.

Positions 85-135 (YRVKRGHRQQYTQIEIESLNANGPASSDDEEAAETSDAEPDEDPEAEPAEA) are disordered. Polar residues predominate over residues 93–107 (QQYTQIEIESLNANG). Residues 111–135 (SDDEEAAETSDAEPDEDPEAEPAEA) show a composition bias toward acidic residues.

The protein belongs to the bacterial ribosomal protein bL21 family. As to quaternary structure, part of the 50S ribosomal subunit. Contacts protein L20.

This protein binds to 23S rRNA in the presence of protein L20. The polypeptide is Large ribosomal subunit protein bL21 (Salinibacter ruber (strain DSM 13855 / M31)).